The following is a 1142-amino-acid chain: SNF1-activating kinase 1 (1142 aa).

The interval 22–41 is disordered; that stretch reads ELEKSGTSSSVSLRSPTKSS. At Thr-43 the chain carries Phosphothreonine. Polar residues predominate over residues 82 to 93; it reads QHQQHISSSLAK. A disordered region spans residues 82-107; sequence QHQQHISSSLAKTPTTTSSFCSSGSS. Over residues 94-107 the composition is skewed to low complexity; that stretch reads TPTTTSSFCSSGSS. Residues 133–448 form the Protein kinase domain; it reads YEIIKELGHG…IPAIKKHPFV (316 aa). Residues 139-147 and Lys-162 contribute to the ATP site; that span reads LGHGQHGKV. Asp-277 serves as the catalytic Proton acceptor. Disordered stretches follow at residues 634-678, 694-799, 825-875, 919-971, 1005-1027, and 1066-1142; these read SPEA…VLPQ, NSLL…NSPI, SHFN…AYSE, KSSL…QKGS, SQPI…KATT, and STNA…SALP. Over residues 640–656 the composition is skewed to polar residues; it reads SVSSVPNLPSAPSSTRL. The span at 694-706 shows a compositional bias: low complexity; it reads NSLLRNSSSHLTS. Residues 707 to 741 show a composition bias toward polar residues; sequence YNSGRPSSRTGRMNSRNQNLPKIPNSLSKISTTKL. Basic and acidic residues predominate over residues 742-751; sequence TELRVPKDSE. The span at 785-799 shows a compositional bias: polar residues; it reads NINSSDKSGSKNSPI. Low complexity-rich tracts occupy residues 835 to 868 and 920 to 936; these read SSQS…RNSS and SSLN…SSSS. The span at 958–971 shows a compositional bias: polar residues; the sequence is SKLSELSNSPQKGS. Ser-964 carries the phosphoserine modification. Over residues 1096-1111 the composition is skewed to basic and acidic residues; sequence NDEHARNTSCHGDKGQ. Ser-1126 bears the Phosphoserine mark. A compositionally biased stretch (basic and acidic residues) spans 1133–1142; it reads NEEKRRSALP.

The protein belongs to the protein kinase superfamily. Ser/Thr protein kinase family. In terms of assembly, associates with the SNF1 kinase complex. Interacts with SNF1 and REG1. Autophosphorylated.

Its subcellular location is the cytoplasm. It carries out the reaction L-seryl-[protein] + ATP = O-phospho-L-seryl-[protein] + ADP + H(+). It catalyses the reaction L-threonyl-[protein] + ATP = O-phospho-L-threonyl-[protein] + ADP + H(+). Its function is as follows. Serine/threonine-protein kinase that phosphorylates SNF1, the catalytic subunit of the SNF1 kinase complex. Acts as an activator of the SNF1 kinase complex and controls its nuclear localization upon glucose and nitrogen depletion. Also required for SNF1 kinase activation under other stress conditions like alkaline pH or presence of cadmium. In Saccharomyces cerevisiae (strain ATCC 204508 / S288c) (Baker's yeast), this protein is SNF1-activating kinase 1 (SAK1).